A 404-amino-acid polypeptide reads, in one-letter code: MEEQHQEAGNESKPSSTSVDLQGDSPLQVEISDAVSERDKVKFTVQTKSGLPHFAQSEFSVVRQHEEFIWLHDTYVENEEYAGLIIPPAPPRPDFEASREKLQKLGEGNSSITREEFSKMKQELEAEYLAIFKKTVAMHEVFLQRLAAHPTLRRDHNFSVFLEYSQDLSVREKNRKEVLGGLLRSIVRSADEVLITGISGLKEVDDFFEHERTFLVEYHTRIRDTCQRADRVMHSHKCLADNYIPISAALSSLGTQEVNQLKRSFLKLAELFERLRKLEGRVASDEDLKLSDMLRYYMRDSQAAKDLLYRRLRALADYENANKALDKARTRNREVRPAESRQQLCCQRFERLSDSAKQELMDFKSRRVSSFRKNLIELAELELKHAKASTLLLQNTLVALKGEP.

Over residues 1–10 (MEEQHQEAGN) the composition is skewed to basic and acidic residues. Positions 1-29 (MEEQHQEAGNESKPSSTSVDLQGDSPLQV) are disordered. The span at 11 to 20 (ESKPSSTSVD) shows a compositional bias: polar residues. The 148-residue stretch at 21 to 168 (LQGDSPLQVE…SVFLEYSQDL (148 aa)) folds into the PX domain. A coiled-coil region spans residues 255–336 (TQEVNQLKRS…KARTRNREVR (82 aa)).

Belongs to the sorting nexin family.

Functionally, may be involved in several stages of intracellular trafficking. The polypeptide is Sorting nexin-32 (Snx32) (Mus musculus (Mouse)).